We begin with the raw amino-acid sequence, 859 residues long: Cadherin-related family member 1 (859 aa).

An N-terminal signal peptide occupies residues 1–21; sequence MRRGPQVALVLGLLCIYLAQA. Residues 22-701 lie on the Extracellular side of the membrane; it reads NFAPHFFDNG…LIQTKDNPMK (680 aa). Cadherin domains follow at residues 36-135, 136-247, 248-354, 360-473, 474-577, and 569-691; these read NGNM…APRF, LQEP…APIF, VGTP…PPTF, PQNK…VPKF, TSHY…YPQF, and DVND…MAAF. Asparagine 58 and asparagine 89 each carry an N-linked (GlcNAc...) asparagine glycan. Residues asparagine 288 and asparagine 297 are each glycosylated (N-linked (GlcNAc...) asparagine). A helical membrane pass occupies residues 702-722; it reads AVGVLAGVMAIVVAITVLIST. The Cytoplasmic portion of the chain corresponds to 723-859; that stretch reads ATFWRNKKSN…KKSLGNKAYV (137 aa). Residues 789–859 form a disordered region; sequence PPRAPALPPP…KKSLGNKAYV (71 aa). Residues 790 to 800 are compositionally biased toward pro residues; that stretch reads PRAPALPPPPK. Residues 802 to 816 show a composition bias toward polar residues; sequence ASSTVAQQTVPTVSG. A compositionally biased stretch (low complexity) spans 817–827; the sequence is SLTPQPSQQLP.

Interacts with PROM1. In terms of processing, undergoes proteolytic cleavage; produces a soluble 95 kDa N-terminal fragment and a 25 kDa cell-associated C-terminal fragment. As to expression, expressed in the retina. Strongly expressed by the mitral and tufted cells in the main and accessory olfactory bulbs. Also expressed in the septum and olfactory cortex. Weakly expressed in the triangular septal nucleus and piriform cortex.

It localises to the cell membrane. Potential calcium-dependent cell-adhesion protein. May be required for the structural integrity of the outer segment (OS) of photoreceptor cells. This chain is Cadherin-related family member 1 (Cdhr1), found in Rattus norvegicus (Rat).